Here is a 363-residue protein sequence, read N- to C-terminus: Aspartate-semialdehyde dehydrogenase (363 aa).

Positions 15, 16, 17, 18, 40, 43, and 87 each coordinate NADP(+). The active-site Acyl-thioester intermediate is Cys-154. Gly-186 provides a ligand contact to NADP(+). The active-site Proton acceptor is the His-251. Asn-341 provides a ligand contact to NADP(+).

This sequence belongs to the aspartate-semialdehyde dehydrogenase family. As to quaternary structure, homotetramer; dimer of dimers.

The protein localises to the cytoplasm. Its subcellular location is the cytosol. It is found in the nucleus. It carries out the reaction L-aspartate 4-semialdehyde + phosphate + NADP(+) = 4-phospho-L-aspartate + NADPH + H(+). It functions in the pathway amino-acid biosynthesis; L-methionine biosynthesis via de novo pathway; L-homoserine from L-aspartate: step 2/3. The protein operates within amino-acid biosynthesis; L-threonine biosynthesis; L-threonine from L-aspartate: step 2/5. Its activity is regulated as follows. Inhibited by 4-amino-3-hydroxynaphthalene-1-sulfonic acid and the competitive inhibitor 1,4-benzoquinone and derivates such as 2-chloro-3-methoxy-1,4-naphthoquinone, 2,3-dichloro-1,4-naphthoquinone, 2-chloro-1,4-naphthoquinone, 2-bromo-1,4-naphthoquinone and 2,3-dichloro-5,8-dihydroxy-1,4-naphthoquinone. Its function is as follows. Catalyzes the NADPH-dependent formation of L-aspartate 4-semialdehyde (L-ASA) by the reductive dephosphorylation of 4-phospho-L-aspartate. Mediates the second step in the biosynthesis of amino acids that derive from aspartate (the aspartate family of amino acids), including methioinine and threonine, the latter of which is a precursor to isoleucine. The polypeptide is Aspartate-semialdehyde dehydrogenase (Aspergillus fumigatus (strain ATCC MYA-4609 / CBS 101355 / FGSC A1100 / Af293) (Neosartorya fumigata)).